The primary structure comprises 357 residues: Red-sensitive opsin (357 aa).

The Extracellular segment spans residues 1–49 (MAEQWGKQVFAARRQNEDTTRGSAFTYTNSNHTRDPFEGPNYHIAPRWV). Asparagine 31 carries an N-linked (GlcNAc...) asparagine glycan. The helical transmembrane segment at 50–74 (YNLATLWMFFVVVLSVFTNGLVLVA) threads the bilayer. Residues 75–86 (TAKFKKLRHPLN) are Cytoplasmic-facing. A helical transmembrane segment spans residues 87-112 (WILSNLAIADLGETVFASTISVCNQF). At 113-126 (FGYFILGHPMCVFE) the chain is on the extracellular side. Cysteine 123 and cysteine 200 are disulfide-bonded. A helical transmembrane segment spans residues 127–146 (GYVVSTCGIAALWSLTIISW). Residues 147–165 (ERWVVVCKPFGNVKFDAKW) lie on the Cytoplasmic side of the membrane. A helical transmembrane segment spans residues 166–189 (AIGGIVFSWVWSAVWCAPPVFGWS). Topologically, residues 190–215 (RYWPHGLKTSCGPDVFSGSDDPGVQS) are extracellular. Residues 216-243 (YMIVLMITCCIIPLAIIILCYLAVWLAI) form a helical membrane-spanning segment. Residues 244-265 (RAVAMQQKESESTQKAEREVSR) are Cytoplasmic-facing. Residues 266–289 (MVVVMIVAYCVCWGPYTFFACFAA) form a helical membrane-spanning segment. The Extracellular segment spans residues 290–297 (ANPGYAFH). The helical transmembrane segment at 298–322 (PLAAAMPAYFAKSATIYNPVIYVFM) threads the bilayer. Lysine 309 carries the N6-(retinylidene)lysine modification. Over 323 to 357 (NRQFRTCIMQLFGKQVDDGSEVSTSKTEVSSVAPA) the chain is Cytoplasmic.

This sequence belongs to the G-protein coupled receptor 1 family. Opsin subfamily. Post-translationally, phosphorylated on some or all of the serine and threonine residues present in the C-terminal region. As to expression, the color pigments are found in the cone photoreceptor cells.

Its subcellular location is the membrane. Functionally, visual pigments are the light-absorbing molecules that mediate vision. They consist of an apoprotein, opsin, covalently linked to cis-retinal. This Oryzias latipes (Japanese rice fish) protein is Red-sensitive opsin.